Reading from the N-terminus, the 141-residue chain is Ribosome maturation factor RimP (141 aa).

It belongs to the RimP family.

The protein localises to the cytoplasm. In terms of biological role, required for maturation of 30S ribosomal subunits. This chain is Ribosome maturation factor RimP, found in Laribacter hongkongensis (strain HLHK9).